Consider the following 518-residue polypeptide: Histone deacetylase 1 (518 aa).

Positions 22–333 are histone deacetylase; that stretch reads RRVCYFYDAE…WCYETGVALG (312 aa). Catalysis depends on His-153, which acts as the Proton donor/acceptor. Zn(2+) is bound by residues Asp-188, His-190, and Asp-276. Residues 387–518 form a disordered region; the sequence is HAPSVQFQER…QDQPSVHQKT (132 aa). The segment covering 401–412 has biased composition (acidic residues); that stretch reads ELPEQDEDQEDP. Over residues 413 to 435 the composition is skewed to basic and acidic residues; that stretch reads DERHHADSDVEMDDVKPLDDSGR. Residues 503-518 are compositionally biased toward polar residues; it reads DNSNKLQDQPSVHQKT.

It belongs to the histone deacetylase family. HD Type 1 subfamily. In terms of assembly, interacts with TPR3. The cofactor is Zn(2+). In terms of tissue distribution, expressed in roots and leaves.

It is found in the nucleus. It carries out the reaction N(6)-acetyl-L-lysyl-[histone] + H2O = L-lysyl-[histone] + acetate. Responsible for the deacetylation of lysine residues on the N-terminal part of the core histones (H2A, H2B, H3 and H4). Histone deacetylation gives a tag for epigenetic repression and plays an important role in transcriptional regulation, cell cycle progression and developmental events. Histone deacetylases act via the formation of large multiprotein complexes. Negatively regulates the expression of the NAC48/NAC6 gene that controls root growth in seedlings. Epigenetically represses the expression of NAC48/NAC6 by deacetylating 'Lys-9' (H3K9ac), 'Lys-14' (H3K14ac) and 'Lys-18' (H3K18ac) of histone H3, and 'Lys-5' (H4K5ac), 'Lys-12' (H4K12ac) and 'Lys-16' (H4K16ac) of histone H4. Functions in the regulation of gene expression in the whole genome. Acts as a chromatin remodeling regulator to promote the formation of a repressive chromatin state. Functions with MODD via its interaction with TPR3, to down-regulates the histone acetylation level at BZIP46 target genes. BZIP46 is a positive regulator of abscisic acid (ABA) signaling and drought stress tolerance. The polypeptide is Histone deacetylase 1 (Oryza sativa subsp. japonica (Rice)).